Consider the following 248-residue polypeptide: 2,3-bisphosphoglycerate-dependent phosphoglycerate mutase (248 aa).

Residues Arg-8–Asn-15, Thr-21–Gly-22, Arg-60, Glu-87–Tyr-90, Lys-98, Arg-114–Arg-115, and Gly-183–Asn-184 each bind substrate. Catalysis depends on His-9, which acts as the Tele-phosphohistidine intermediate. The active-site Proton donor/acceptor is the Glu-87.

Belongs to the phosphoglycerate mutase family. BPG-dependent PGAM subfamily. In terms of assembly, homodimer.

The enzyme catalyses (2R)-2-phosphoglycerate = (2R)-3-phosphoglycerate. It participates in carbohydrate degradation; glycolysis; pyruvate from D-glyceraldehyde 3-phosphate: step 3/5. Catalyzes the interconversion of 2-phosphoglycerate and 3-phosphoglycerate. This chain is 2,3-bisphosphoglycerate-dependent phosphoglycerate mutase, found in Paraburkholderia phymatum (strain DSM 17167 / CIP 108236 / LMG 21445 / STM815) (Burkholderia phymatum).